The primary structure comprises 727 residues: Transcription activator of gluconeogenesis TRV_01442 (727 aa).

Over residues methionine 1–glutamate 32 the composition is skewed to polar residues. Residues methionine 1–lysine 62 form a disordered region. A compositionally biased stretch (basic and acidic residues) spans alanine 39–arginine 55. Positions cysteine 65–cysteine 93 form a DNA-binding region, zn(2)-C6 fungal-type. Polar residues-rich tracts occupy residues asparagine 129 to alanine 213, proline 267 to isoleucine 277, and methionine 361 to asparagine 379. Disordered regions lie at residues asparagine 129–threonine 224, aspartate 264–serine 297, serine 353–glutamine 399, asparagine 533–serine 567, and glycine 627–tryptophan 666. Composition is skewed to low complexity over residues serine 380 to glutamine 399 and glycine 543 to serine 553. Polar residues predominate over residues glutamate 639 to arginine 661.

It belongs to the ERT1/acuK family.

It is found in the nucleus. Functionally, transcription factor which regulates nonfermentable carbon utilization. Activator of gluconeogenetic genes. The sequence is that of Transcription activator of gluconeogenesis TRV_01442 from Trichophyton verrucosum (strain HKI 0517).